A 624-amino-acid polypeptide reads, in one-letter code: Chaperone protein HtpG (624 aa).

The segment at 1-336 (MKTQKKEVYN…SSDLPLNISR (336 aa)) is a; substrate-binding. A b region spans residues 337 to 552 (EILQDNSITE…STEMTTQMAK (216 aa)). Positions 553–624 (LFSAAGQSVP…ISRMNKLLIK (72 aa)) are c.

Belongs to the heat shock protein 90 family. In terms of assembly, homodimer.

It is found in the cytoplasm. In terms of biological role, molecular chaperone. Has ATPase activity. In Buchnera aphidicola subsp. Acyrthosiphon pisum (strain APS) (Acyrthosiphon pisum symbiotic bacterium), this protein is Chaperone protein HtpG.